We begin with the raw amino-acid sequence, 144 residues long: Putative pre-16S rRNA nuclease (144 aa).

It belongs to the YqgF nuclease family.

The protein localises to the cytoplasm. Its function is as follows. Could be a nuclease involved in processing of the 5'-end of pre-16S rRNA. The polypeptide is Putative pre-16S rRNA nuclease (Oleidesulfovibrio alaskensis (strain ATCC BAA-1058 / DSM 17464 / G20) (Desulfovibrio alaskensis)).